The following is a 184-amino-acid chain: Dirigent protein 14 (184 aa).

A signal peptide spans M1 to S20. A disulfide bond links C36 and C182. N55 and N119 each carry an N-linked (GlcNAc...) asparagine glycan.

It belongs to the plant dirigent protein family. In terms of assembly, homodimer.

The protein resides in the secreted. The protein localises to the extracellular space. Its subcellular location is the apoplast. In terms of biological role, dirigent proteins impart stereoselectivity on the phenoxy radical-coupling reaction, yielding optically active lignans from two molecules of coniferyl alcohol in the biosynthesis of lignans, flavonolignans, and alkaloids and thus plays a central role in plant secondary metabolism. The polypeptide is Dirigent protein 14 (DIR14) (Arabidopsis thaliana (Mouse-ear cress)).